The primary structure comprises 81 residues: Small ribosomal subunit protein bS18 (81 aa).

This sequence belongs to the bacterial ribosomal protein bS18 family. As to quaternary structure, part of the 30S ribosomal subunit. Forms a tight heterodimer with protein bS6.

Functionally, binds as a heterodimer with protein bS6 to the central domain of the 16S rRNA, where it helps stabilize the platform of the 30S subunit. This is Small ribosomal subunit protein bS18 from Chloroflexus aurantiacus (strain ATCC 29366 / DSM 635 / J-10-fl).